The chain runs to 125 residues: Small ribosomal subunit protein uS13 (125 aa).

The segment at 90-125 (TRHRRGLPVRGQRTHTNARTKKGPRRAIAGKKKVTK) is disordered.

Belongs to the universal ribosomal protein uS13 family. Part of the 30S ribosomal subunit. Forms a loose heterodimer with protein S19. Forms two bridges to the 50S subunit in the 70S ribosome.

In terms of biological role, located at the top of the head of the 30S subunit, it contacts several helices of the 16S rRNA. In the 70S ribosome it contacts the 23S rRNA (bridge B1a) and protein L5 of the 50S subunit (bridge B1b), connecting the 2 subunits; these bridges are implicated in subunit movement. Contacts the tRNAs in the A and P-sites. This is Small ribosomal subunit protein uS13 from Gemmatimonas aurantiaca (strain DSM 14586 / JCM 11422 / NBRC 100505 / T-27).